The chain runs to 296 residues: MSTFLQDNGDLSAVLVKFAPFAVAVIAILAAWKFTGSSKPRKVLNPSEFQNFVLKEKTDISHNVAIYRFALPRPTDILGLPIGQHISLAATIEGQPKEVVRSYTPISSDNEAGYFDLLVKAYPQGNISKYLTTLKIGDTLKVRGPKGAMVYTPNMCRHIGMIAGGTGITPMLQIIKAIIRNRPRNGGNDTTKIDLIFANVNEEDILLRDELEKLAKEDDGFRIFYVLNNPPPGWNGGFGFVTAEMIKEHLPAPAKDVKILLCGPPPMVSAMKKATESLGYTKARPVSKLEDQVFCF.

Residues 11–31 form a helical membrane-spanning segment; sequence LSAVLVKFAPFAVAVIAILAA. In terms of domain architecture, FAD-binding FR-type spans 47-152; that stretch reads SEFQNFVLKE…RGPKGAMVYT (106 aa). Residues 132–147 and 158–195 each bind FAD; these read TTLKIGDTLKVRGPKG and HIGMIAGGTGITPMLQIIKAIIRNRPRNGGNDTTKIDL.

The protein belongs to the flavoprotein pyridine nucleotide cytochrome reductase family. In terms of assembly, monomer. Component of the 2-(3-amino-3-carboxypropyl)histidine synthase complex composed of dph1, dph2, dph3 and a NADH-dependent reductase, predominantly cbr1. The cofactor is FAD.

It is found in the mitochondrion outer membrane. It carries out the reaction 2 Fe(III)-[cytochrome b5] + NADH = 2 Fe(II)-[cytochrome b5] + NAD(+) + H(+). It catalyses the reaction 2 Fe(3+)-[Dph3] + NADH = 2 Fe(2+)-[Dph3] + NAD(+) + H(+). It participates in protein modification; peptidyl-diphthamide biosynthesis. In terms of biological role, NADH-dependent reductase for dph3 and cytochrome b5. Required for the first step of diphthamide biosynthesis, a post-translational modification of histidine which occurs in elongation factor 2. Dph1 and dph2 transfer a 3-amino-3-carboxypropyl (ACP) group from S-adenosyl-L-methionine (SAM) to a histidine residue, the reaction is assisted by a reduction system comprising dph3 and a NADH-dependent reductase, predominantly cbr1. By reducing dph3, also involved in the formation of the tRNA wobble base modification mcm5s 2U (5-methoxycarbonylmethyl-2-thiouridine), mediated by the elongator complex. The cytochrome b5/NADH cytochrome b5 reductase electron transfer system supports the catalytic activity of several sterol biosynthetic enzymes. The chain is NADH-cytochrome b5 reductase 1 (cbr1) from Aspergillus terreus (strain NIH 2624 / FGSC A1156).